The chain runs to 696 residues: Tegument protein UL47 (696 aa).

Composition is skewed to basic residues over residues 1-15 (MSVRGHAVRRRRAST) and 70-81 (RRRREARGHPGS). 2 disordered regions span residues 1 to 39 (MSVRGHAVRRRRASTRSHAPSAHRADSPVEDEPEGGGVG) and 54 to 130 (SEVE…YLGP). The tract at residues 57-84 (EAAGEMASEEPPPRRRREARGHPGSRRA) is RNA-binding. A Nuclear localization signal motif is present at residues 70-84 (RRRREARGHPGSRRA). Residues 87–103 (ARAAAPPRRASFPRPRS) are compositionally biased toward low complexity. The Nuclear export signal motif lies at 650–673 (SVLGPRVRVVDIMAQFRKLLMGDE).

Belongs to the alphaherpesvirinae HHV-1 UL47 family. In terms of assembly, interacts with US3 kinase. Interacts with UL31 and UL34; these interactions seem important for efficient virion nuclear egress. Interacts with UL41/VHS. Post-translationally, phosphorylated by US3. This phosphorylation is required for proper nuclear localization.

The protein resides in the virion tegument. It is found in the host nucleus. It localises to the host cytoplasm. In terms of biological role, tegument protein that can bind to various RNA transcripts. Plays a role in the attenuation of selective viral and cellular mRNA degradation by modulating the activity of host shutoff RNase UL41/VHS. Also plays a role in the primary envelopment of virions in the perinuclear space, probably by interacting with two nuclear egress proteins UL31 and UL34. This Human herpesvirus 2 (strain HG52) (HHV-2) protein is Tegument protein UL47.